The primary structure comprises 68 residues: Frenatin-3 (68 aa).

The signal sequence occupies residues 1–22; it reads MHFLKKSIFLVLFLGLVSLSIC. Positions 23 to 46 are excised as a propeptide; the sequence is EKEKREDQNEEEVDENEEESEEKR. Positions 26–47 are disordered; it reads KREDQNEEEVDENEEESEEKRG. Positions 30 to 42 are enriched in acidic residues; it reads QNEEEVDENEEES.

It belongs to the frog skin active peptide (FSAP) family. Frenatin subfamily. Expressed by the granular skin glands.

It is found in the secreted. Its function is as follows. Antimicrobial peptide with activity against both Gram-positive and Gram-negative bacteria. Antibacterial activities have been tested against Bacillus cereus (MIC=12.5 ug/ml), Escherichia coli (MIC=50 ug/ml), Leuconostoc mesenteroides (MIC=25 ug/ml), Micrococcus luteus (MIC=1.5 ug/ml), Pastewella haemolytica (MIC=0.8 ug/ml), Staphylococcus aureus (MIC&lt;l00 ug/ml), Streptococcus faecalis (MIC&lt;150 ug/ml) and Streptococcus uberis (MIC=50 ug/ml). Strongly inhibits the formation of NO by neuronal nitric oxide synthase (nNOS) at micromolar concentrations. Acts by a non-competitive mechanism, probably by binding to calcium/calmodulin and as a consequence blocking calmodulin attachment to nNOS. This is Frenatin-3 from Nyctimystes infrafrenatus (White-lipped tree frog).